The primary structure comprises 145 residues: Selenoprotein M (145 aa).

An N-terminal signal peptide occupies residues 1–23 (MSILLSPPSLLLLLAALVAPATS). Residues Cys-45 and Sec-48 each act as nucleophile in the active site. The segment at residues 45 to 48 (CGGU) is a cross-link (cysteinyl-selenocysteine (Cys-Sec)). Residue Sec-48 is a non-standard amino acid, selenocysteine. The interval 125–145 (PPEYLWAPAKPPEEASEHDDL) is disordered.

It belongs to the selenoprotein M/F family. As to expression, widely expressed. Highly expressed in brain.

It localises to the cytoplasm. Its subcellular location is the perinuclear region. It is found in the endoplasmic reticulum. The protein localises to the golgi apparatus. In terms of biological role, may function as a thiol-disulfide oxidoreductase that participates in disulfide bond formation. The sequence is that of Selenoprotein M from Mus musculus (Mouse).